Consider the following 313-residue polypeptide: MNSSNLLMECIKSEKIESGPMYGQFLIDSLSSGQGITIGNLLRRVLLGDLQGTAITGVRIAGVKDEFSLIPGVREDILEILLNLKGIVLKSKTPNRQFGRLRLQGPAVITASSIQLPPEIEIINPNHYIATISSSHILEIEFKIESGSKYRLANELFSDKFEDFIETDAIFMPVQKVDFKVENVYDNSNNIKERLLIDIWTNGSISPEQAIFSGSNLIINLFKSIGEQKINKEKENIKEKNHIKPIDPYTHIAIEELQLSVRPYNCLKRAQINTIGDLLDYSPEKLLELKNFGRKSADEVFATLKNKLGIVLK.

Residues 1 to 229 (MNSSNLLMEC…NLFKSIGEQK (229 aa)) form an alpha N-terminal domain (alpha-NTD) region. The interval 243 to 313 (IKPIDPYTHI…LKNKLGIVLK (71 aa)) is alpha C-terminal domain (alpha-CTD).

The protein belongs to the RNA polymerase alpha chain family. As to quaternary structure, in plastids the minimal PEP RNA polymerase catalytic core is composed of four subunits: alpha, beta, beta', and beta''. When a (nuclear-encoded) sigma factor is associated with the core the holoenzyme is formed, which can initiate transcription.

The protein resides in the plastid. It is found in the chloroplast. The catalysed reaction is RNA(n) + a ribonucleoside 5'-triphosphate = RNA(n+1) + diphosphate. DNA-dependent RNA polymerase catalyzes the transcription of DNA into RNA using the four ribonucleoside triphosphates as substrates. This is DNA-directed RNA polymerase subunit alpha from Thalassiosira pseudonana (Marine diatom).